Here is a 466-residue protein sequence, read N- to C-terminus: Argininosuccinate lyase (466 aa).

The protein belongs to the lyase 1 family. Argininosuccinate lyase subfamily.

Its subcellular location is the cytoplasm. It catalyses the reaction 2-(N(omega)-L-arginino)succinate = fumarate + L-arginine. Its pathway is amino-acid biosynthesis; L-arginine biosynthesis; L-arginine from L-ornithine and carbamoyl phosphate: step 3/3. This Synechococcus sp. (strain ATCC 27144 / PCC 6301 / SAUG 1402/1) (Anacystis nidulans) protein is Argininosuccinate lyase.